A 158-amino-acid polypeptide reads, in one-letter code: UPF0225 protein PSEEN1229 (158 aa).

The protein belongs to the UPF0225 family.

The protein is UPF0225 protein PSEEN1229 of Pseudomonas entomophila (strain L48).